A 152-amino-acid chain; its full sequence is Interleukin-1 family member 10 (152 aa).

It belongs to the IL-1 family. Interacts with cargo receptor TMED10; the interaction mediates the translocation from the cytoplasm into the ERGIC (endoplasmic reticulum-Golgi intermediate compartment) and thereby secretion.

It localises to the cytoplasm. The protein resides in the endoplasmic reticulum-Golgi intermediate compartment. It is found in the secreted. Its function is as follows. Cytokine with immunomodulatory activity. Alone, does not induce cytokine production, but reduces IL22 and IL17A production by T-cells in response to heat-killed Candida albicans. Reduces IL36G-induced production of IL8 by peripheral blood mononuclear cells. Increases IL6 production by dendritic cells stimulated by bacterial lipopolysaccharides (LPS). Ligand for IL-36R/IL1RL2. This is Interleukin-1 family member 10 (Il1f10) from Mus musculus (Mouse).